A 430-amino-acid chain; its full sequence is Glutamate-1-semialdehyde 2,1-aminomutase (430 aa).

The residue at position 267 (Lys267) is an N6-(pyridoxal phosphate)lysine.

The protein belongs to the class-III pyridoxal-phosphate-dependent aminotransferase family. HemL subfamily. In terms of assembly, homodimer. It depends on pyridoxal 5'-phosphate as a cofactor.

It localises to the cytoplasm. It catalyses the reaction (S)-4-amino-5-oxopentanoate = 5-aminolevulinate. It participates in porphyrin-containing compound metabolism; protoporphyrin-IX biosynthesis; 5-aminolevulinate from L-glutamyl-tRNA(Glu): step 2/2. This is Glutamate-1-semialdehyde 2,1-aminomutase from Thermomicrobium roseum (strain ATCC 27502 / DSM 5159 / P-2).